Here is a 284-residue protein sequence, read N- to C-terminus: 2-dehydro-3-deoxyphosphooctonate aldolase (284 aa).

The protein belongs to the KdsA family.

It localises to the cytoplasm. The enzyme catalyses D-arabinose 5-phosphate + phosphoenolpyruvate + H2O = 3-deoxy-alpha-D-manno-2-octulosonate-8-phosphate + phosphate. Its pathway is carbohydrate biosynthesis; 3-deoxy-D-manno-octulosonate biosynthesis; 3-deoxy-D-manno-octulosonate from D-ribulose 5-phosphate: step 2/3. The protein operates within bacterial outer membrane biogenesis; lipopolysaccharide biosynthesis. The sequence is that of 2-dehydro-3-deoxyphosphooctonate aldolase from Actinobacillus succinogenes (strain ATCC 55618 / DSM 22257 / CCUG 43843 / 130Z).